We begin with the raw amino-acid sequence, 367 residues long: Alanine racemase (367 aa).

Lys40 acts as the Proton acceptor; specific for D-alanine in catalysis. Lys40 carries the N6-(pyridoxal phosphate)lysine modification. Arg136 is a binding site for substrate. The active-site Proton acceptor; specific for L-alanine is Tyr263. Met310 lines the substrate pocket.

This sequence belongs to the alanine racemase family. Requires pyridoxal 5'-phosphate as cofactor.

The enzyme catalyses L-alanine = D-alanine. It functions in the pathway amino-acid biosynthesis; D-alanine biosynthesis; D-alanine from L-alanine: step 1/1. In terms of biological role, catalyzes the interconversion of L-alanine and D-alanine. May also act on other amino acids. The sequence is that of Alanine racemase (alr) from Streptococcus pneumoniae (strain 70585).